The sequence spans 274 residues: Large ribosomal subunit protein uL2cz/uL2cy (274 aa).

Disordered regions lie at residues 1-25 (MAIH…VKSN) and 224-274 (NPVD…RRSK).

Belongs to the universal ribosomal protein uL2 family. As to quaternary structure, part of the 50S ribosomal subunit.

The protein resides in the plastid. It is found in the chloroplast. The protein is Large ribosomal subunit protein uL2cz/uL2cy (rpl2-A) of Aethionema cordifolium (Lebanon stonecress).